An 857-amino-acid polypeptide reads, in one-letter code: MSNSSARPESLGEYLAHLPLSDEQRAELASCTSFSELHQRLAANPAASSAEAVQASVGPRLTVGSAAELEEAEMLGVDGSGRLCLKIAPPIKRTKVVPEPWRTNVLIRMWRRMTGRPNAPQPPKRELPPARWRTVGSIRRYILLALMIGQTIVAGWYMKGILPYQGWSFVDFDEIVNQPLWDTVVQVWPYALQTSILILFGILFCWVSAGFWTALMGFLELLTGRDKYKISGSSAGNEPIAPEARTALVMPICNEDVPRVFAGLRATFESVAASGNLDRFDFFVLSDTNDTDIAVAEQQAWLDVCRETKGFGRIFYRRRRRRVKRKSGNLDDFCRRWGGEYKYMVVLDADSVMSGECLSSLVRLMEANPDAGIIQTGPKASGMDTLYARMQQFATRVYGPLFTAGLHFWQLGESHYWGHNAIIRMKPFIEHCALAPLPGKGAFAGAILSHDFVEAALMRRAGWGVWIAYDLPGSYEELPPNLLDELKRDRRWCHGNLMNFRLFLVKGMHPVHRAVFLTGVMSYLSAPLWFLFLVLSTALLATNTLMEPQYFIEPYQLYPLWPQWHPEKAVALFSTTIVLLFLPKLLSVILIWAKGAVEYGGRVKVTLSMLMEMLFSMLLAPVRMIFHTRFVLAAFLGWAATWNSPQRDDDSTPWGEAVRRHGPQTLLGIAWAALVAWLNPSFLWWLAPIVGSLVLSIPVSVISSRTRLGLAAKDEKLFLIPEEYATPQELLATDQYTHENRWHALHDGFVRAVVDPRQNALACAMATARHGQAAPIEALRAERVAKAIEVGPKGLDLNTRLALLSDPVALSRLHEQVWAEHNAAWIDVWRASINNDPHSPLLPLHPENAGQPSLVGA.

6 helical membrane-spanning segments follow: residues tyrosine 141–methionine 158, leucine 197–leucine 219, alanine 514–serine 536, valine 570–tryptophan 592, valine 605–histidine 627, and serine 681–serine 703.

It belongs to the glycosyltransferase 2 family. OpgH subfamily.

Its subcellular location is the cell inner membrane. Its pathway is glycan metabolism; osmoregulated periplasmic glucan (OPG) biosynthesis. In terms of biological role, involved in the biosynthesis of osmoregulated periplasmic glucans (OPGs). The chain is Glucans biosynthesis glucosyltransferase H from Pseudomonas putida (strain ATCC 47054 / DSM 6125 / CFBP 8728 / NCIMB 11950 / KT2440).